A 466-amino-acid chain; its full sequence is Delta-1 crystallin (466 aa).

This sequence belongs to the lyase 1 family. Argininosuccinate lyase subfamily. As to quaternary structure, homotetramer. Eye lens.

In terms of biological role, delta crystallin, the principal crystallin in embryonic lens, is found only in birds and reptiles. The sequence is that of Delta-1 crystallin (ASL1) from Meleagris gallopavo (Wild turkey).